The chain runs to 390 residues: 3-ketoacyl-CoA thiolase (390 aa).

C95 serves as the catalytic Acyl-thioester intermediate. Catalysis depends on proton acceptor residues H346 and C376.

This sequence belongs to the thiolase-like superfamily. Thiolase family. In terms of assembly, heterotetramer of two alpha chains (FadB) and two beta chains (FadA).

Its subcellular location is the cytoplasm. The catalysed reaction is an acyl-CoA + acetyl-CoA = a 3-oxoacyl-CoA + CoA. The protein operates within lipid metabolism; fatty acid beta-oxidation. In terms of biological role, catalyzes the final step of fatty acid oxidation in which acetyl-CoA is released and the CoA ester of a fatty acid two carbons shorter is formed. The polypeptide is 3-ketoacyl-CoA thiolase (Acinetobacter baumannii (strain ATCC 17978 / DSM 105126 / CIP 53.77 / LMG 1025 / NCDC KC755 / 5377)).